The sequence spans 466 residues: Asparagine--tRNA ligase (466 aa).

Belongs to the class-II aminoacyl-tRNA synthetase family. Homodimer.

The protein resides in the cytoplasm. It catalyses the reaction tRNA(Asn) + L-asparagine + ATP = L-asparaginyl-tRNA(Asn) + AMP + diphosphate + H(+). The polypeptide is Asparagine--tRNA ligase (Buchnera aphidicola subsp. Acyrthosiphon pisum (strain APS) (Acyrthosiphon pisum symbiotic bacterium)).